The chain runs to 52 residues: UPF0057 membrane protein At1g57550 (52 aa).

2 consecutive transmembrane segments (helical) span residues 4 to 24 and 30 to 50; these read FLEV…RYGL and VCLL…IYVL.

The protein belongs to the UPF0057 (PMP3) family.

It is found in the membrane. This chain is UPF0057 membrane protein At1g57550, found in Arabidopsis thaliana (Mouse-ear cress).